A 178-amino-acid polypeptide reads, in one-letter code: Large ribosomal subunit protein uL10 (178 aa).

It belongs to the universal ribosomal protein uL10 family. Part of the ribosomal stalk of the 50S ribosomal subunit. The N-terminus interacts with L11 and the large rRNA to form the base of the stalk. The C-terminus forms an elongated spine to which L12 dimers bind in a sequential fashion forming a multimeric L10(L12)X complex.

Its function is as follows. Forms part of the ribosomal stalk, playing a central role in the interaction of the ribosome with GTP-bound translation factors. The polypeptide is Large ribosomal subunit protein uL10 (Dictyoglomus thermophilum (strain ATCC 35947 / DSM 3960 / H-6-12)).